Reading from the N-terminus, the 197-residue chain is Dephospho-CoA kinase (197 aa).

The DPCK domain occupies 2 to 197; it reads IIGITGGIAS…SALLSLANPR (196 aa). Residue 10 to 15 participates in ATP binding; sequence ASGKST.

The protein belongs to the CoaE family.

The protein localises to the cytoplasm. The enzyme catalyses 3'-dephospho-CoA + ATP = ADP + CoA + H(+). It participates in cofactor biosynthesis; coenzyme A biosynthesis; CoA from (R)-pantothenate: step 5/5. Functionally, catalyzes the phosphorylation of the 3'-hydroxyl group of dephosphocoenzyme A to form coenzyme A. The polypeptide is Dephospho-CoA kinase (Streptococcus pyogenes serotype M3 (strain ATCC BAA-595 / MGAS315)).